Consider the following 105-residue polypeptide: Large ribosomal subunit protein eL42 (105 aa).

The interval 28–57 (YKKGKDSLAAQGKRRYDRKQSGYGGQTKPV) is disordered.

Belongs to the eukaryotic ribosomal protein eL42 family.

This Gossypium hirsutum (Upland cotton) protein is Large ribosomal subunit protein eL42 (RPL44).